The following is a 116-amino-acid chain: Probable early E4 11 kDa protein (116 aa).

This is Probable early E4 11 kDa protein from Human adenovirus A serotype 12 (HAdV-12).